The primary structure comprises 378 residues: Probable 3-hydroxyisobutyryl-CoA hydrolase 3 (378 aa).

Residues Glu-138 and Asp-146 each contribute to the substrate site.

This sequence belongs to the enoyl-CoA hydratase/isomerase family.

The protein localises to the peroxisome. The catalysed reaction is 3-hydroxy-2-methylpropanoyl-CoA + H2O = 3-hydroxy-2-methylpropanoate + CoA + H(+). Its pathway is amino-acid degradation; L-valine degradation. In terms of biological role, involved in valine catabolism. The protein is Probable 3-hydroxyisobutyryl-CoA hydrolase 3 of Arabidopsis thaliana (Mouse-ear cress).